The primary structure comprises 75 residues: Sec-independent protein translocase protein TatA (75 aa).

A helical transmembrane segment spans residues 1–21 (MGSFSIWHWLIVLVIVLLVFG). The segment at 41-75 (KGMHDDDKPAGKLGDDSRSAEQAREAQAERDRDAR) is disordered.

The protein belongs to the TatA/E family. The Tat system comprises two distinct complexes: a TatABC complex, containing multiple copies of TatA, TatB and TatC subunits, and a separate TatA complex, containing only TatA subunits. Substrates initially bind to the TatABC complex, which probably triggers association of the separate TatA complex to form the active translocon.

Its subcellular location is the cell inner membrane. Its function is as follows. Part of the twin-arginine translocation (Tat) system that transports large folded proteins containing a characteristic twin-arginine motif in their signal peptide across membranes. TatA could form the protein-conducting channel of the Tat system. The protein is Sec-independent protein translocase protein TatA of Xanthomonas campestris pv. campestris (strain 8004).